The chain runs to 404 residues: Photosynthetic reaction center cytochrome c subunit (404 aa).

Positions 1 to 22 are cleaved as a signal peptide; that stretch reads MSPAQQLTLPAVIVVASVMLLG. Residue cysteine 23 is the site of N-palmitoyl cysteine attachment. Residue cysteine 23 is the site of S-diacylglycerol cysteine attachment. Positions 94, 107, 110, 111, 130, 144, 152, 155, 156, 236, 247, 250, 251, 307, 310, and 311 each coordinate heme. A disordered region spans residues 346–404; sequence ASEAAPAAATEAAPEAPAQEVPAAEAVPAAAEPGAAEAAGSVEPAPVEEVAPAPAAQRL.

As to quaternary structure, component of the photosynthetic reaction center composed of protein subunits L (PufL), M (PufM), H (PuhA) and cytochrome C (PufC). The reaction center interacts with light-harvesting antenna complex LH1. Binds 4 heme groups per subunit.

The protein resides in the cellular chromatophore membrane. Functionally, the reaction center of purple bacteria contains a tightly bound cytochrome molecule which re-reduces the photo oxidized primary electron donor. The sequence is that of Photosynthetic reaction center cytochrome c subunit from Thermochromatium tepidum (Chromatium tepidum).